Here is a 261-residue protein sequence, read N- to C-terminus: Cytochrome c oxidase subunit 2 (261 aa).

Residues 1–34 (MSFTGIFHFFTNSPCDAAEPWQLGSQDAATPMMQ) lie on the Mitochondrial intermembrane side of the membrane. Residues 35-55 (GIIDLHHDIFFFLILILVFVS) traverse the membrane as a helical segment. The Mitochondrial matrix segment spans residues 56–87 (RILVRALWHFHSKKNPIPQRIVHGTTIEILRT). The chain crosses the membrane as a helical span at residues 88-108 (IFPSIIPMFIAIPSFALLYSM). The Mitochondrial intermembrane segment spans residues 109-261 (DEVVVDPAMT…NQLIPQTGEA (153 aa)). Residues His188, Cys223, Glu225, Cys227, and His231 each contribute to the Cu cation site. Residue Glu225 participates in Mg(2+) binding.

The protein belongs to the cytochrome c oxidase subunit 2 family. Component of the cytochrome c oxidase (complex IV, CIV), a multisubunit enzyme composed of a catalytic core of 3 subunits and several supernumerary subunits. The complex exists as a monomer or a dimer and forms supercomplexes (SCs) in the inner mitochondrial membrane with ubiquinol-cytochrome c oxidoreductase (cytochrome b-c1 complex, complex III, CIII). Requires Cu cation as cofactor.

It localises to the mitochondrion inner membrane. It carries out the reaction 4 Fe(II)-[cytochrome c] + O2 + 8 H(+)(in) = 4 Fe(III)-[cytochrome c] + 2 H2O + 4 H(+)(out). Component of the cytochrome c oxidase, the last enzyme in the mitochondrial electron transport chain which drives oxidative phosphorylation. The respiratory chain contains 3 multisubunit complexes succinate dehydrogenase (complex II, CII), ubiquinol-cytochrome c oxidoreductase (cytochrome b-c1 complex, complex III, CIII) and cytochrome c oxidase (complex IV, CIV), that cooperate to transfer electrons derived from NADH and succinate to molecular oxygen, creating an electrochemical gradient over the inner membrane that drives transmembrane transport and the ATP synthase. Cytochrome c oxidase is the component of the respiratory chain that catalyzes the reduction of oxygen to water. Electrons originating from reduced cytochrome c in the intermembrane space (IMS) are transferred via the dinuclear copper A center (CU(A)) of subunit 2 and heme A of subunit 1 to the active site in subunit 1, a binuclear center (BNC) formed by heme A3 and copper B (CU(B)). The BNC reduces molecular oxygen to 2 water molecules using 4 electrons from cytochrome c in the IMS and 4 protons from the mitochondrial matrix. This is Cytochrome c oxidase subunit 2 (COX2) from Daucus carota (Wild carrot).